Consider the following 252-residue polypeptide: Phosphoglycolate phosphatase (252 aa).

The active-site Nucleophile is Asp13. Residues Asp13, Asp15, and Asp192 each coordinate Mg(2+).

It belongs to the HAD-like hydrolase superfamily. CbbY/CbbZ/Gph/YieH family. Monomer. The cofactor is Mg(2+). Chloride serves as cofactor.

It catalyses the reaction 2-phosphoglycolate + H2O = glycolate + phosphate. It participates in organic acid metabolism; glycolate biosynthesis; glycolate from 2-phosphoglycolate: step 1/1. Functionally, specifically catalyzes the dephosphorylation of 2-phosphoglycolate. Is involved in the dissimilation of the intracellular 2-phosphoglycolate formed during the DNA repair of 3'-phosphoglycolate ends, a major class of DNA lesions induced by oxidative stress. The polypeptide is Phosphoglycolate phosphatase (Escherichia coli O157:H7).